The sequence spans 85 residues: U4-theraphotoxin-Hhn1a (85 aa).

The N-terminal stretch at 1 to 22 (MKVTLIAILTCAAVLVLHTTAE) is a signal peptide. Positions 23–48 (EELEAESQLMEVGMPDTELAAVDEER) are excised as a propeptide. Cystine bridges form between Cys52-Cys66, Cys56-Cys77, and Cys71-Cys82.

The protein belongs to the neurotoxin 12 (Hwtx-2) family. 02 (Hwtx-2) subfamily. Monomer. As to expression, expressed by the venom gland.

The protein localises to the secreted. In terms of biological role, neurotoxin active on both insects and mammals. This is U4-theraphotoxin-Hhn1a from Cyriopagopus hainanus (Chinese bird spider).